A 323-amino-acid chain; its full sequence is L-lactate dehydrogenase 1 (323 aa).

NAD(+) contacts are provided by residues V18, D39, Y69, and 83 to 84 (GA). Substrate contacts are provided by Q86 and R92. Residues S105, 122–124 (VAN), and S147 each bind NAD(+). 124-127 (NPVD) contributes to the substrate binding site. 152–155 (DTGR) serves as a coordination point for substrate. H179 acts as the Proton acceptor in catalysis. Y223 is subject to Phosphotyrosine. T232 is a binding site for substrate.

It belongs to the LDH/MDH superfamily. LDH family. In terms of assembly, homotetramer.

The protein resides in the cytoplasm. The catalysed reaction is (S)-lactate + NAD(+) = pyruvate + NADH + H(+). It functions in the pathway fermentation; pyruvate fermentation to lactate; (S)-lactate from pyruvate: step 1/1. Its function is as follows. Catalyzes the conversion of lactate to pyruvate. This Lactobacillus acidophilus (strain ATCC 700396 / NCK56 / N2 / NCFM) protein is L-lactate dehydrogenase 1.